The chain runs to 23 residues: Coenzyme PQQ synthesis protein A (23 aa).

A cross-link (pyrroloquinoline quinone (Glu-Tyr)) is located at residues 15-19; sequence EVTLY.

The protein belongs to the PqqA family.

Its pathway is cofactor biosynthesis; pyrroloquinoline quinone biosynthesis. Functionally, required for coenzyme pyrroloquinoline quinone (PQQ) biosynthesis. PQQ is probably formed by cross-linking a specific glutamate to a specific tyrosine residue and excising these residues from the peptide. The chain is Coenzyme PQQ synthesis protein A from Klebsiella pneumoniae (strain 342).